Consider the following 85-residue polypeptide: Kappa-theraphotoxin-Gr1a (85 aa).

Positions 1–21 (MKTSVFAAILGLALFAVLCSG) are cleaved as a signal peptide. Residues 22–49 (SELQEKDLKETLLSAIMETALEAQPEER) constitute a propeptide that is removed on maturation. Intrachain disulfides connect Cys51/Cys65, Cys58/Cys70, and Cys64/Cys77. An involved in active face region spans residues 53–55 (YLF).

The protein belongs to the neurotoxin 10 (Hwtx-1) family. 09 (HaTx) subfamily. In terms of tissue distribution, expressed by the venom gland.

It localises to the secreted. Inhibits Kv2.1/KCNB1 and Kv4.2/KCND2 voltage-gated potassium channels. Acts as a gating modifier by shifting channel openings to more depolarized voltages and acts via the occupancy of multiple binding sites on the channel. The toxin binding sites are situated on the S3-S4 extracellular linker of the channel. At least two hanatoxin molecules can occupy the Kv2.1/KCNB1 channel, and maybe more (three or four). Can also inhibit calcium channels (Cav2.1/CACNA1A). Needs to partition into the membrane in order to bind to the channel. In Grammostola rosea (Chilean rose tarantula), this protein is Kappa-theraphotoxin-Gr1a.